The sequence spans 505 residues: Histidine ammonia-lyase (505 aa).

Positions 141 to 143 (ASG) form a cross-link, 5-imidazolinone (Ala-Gly). Residue S142 is modified to 2,3-didehydroalanine (Ser).

It belongs to the PAL/histidase family. Post-translationally, contains an active site 4-methylidene-imidazol-5-one (MIO), which is formed autocatalytically by cyclization and dehydration of residues Ala-Ser-Gly.

The protein resides in the cytoplasm. The enzyme catalyses L-histidine = trans-urocanate + NH4(+). It functions in the pathway amino-acid degradation; L-histidine degradation into L-glutamate; N-formimidoyl-L-glutamate from L-histidine: step 1/3. This is Histidine ammonia-lyase from Bacillus cereus (strain AH187).